Here is a 235-residue protein sequence, read N- to C-terminus: Putative N-acetylmannosamine-6-phosphate 2-epimerase (235 aa).

It belongs to the NanE family.

The enzyme catalyses an N-acyl-D-glucosamine 6-phosphate = an N-acyl-D-mannosamine 6-phosphate. Its pathway is amino-sugar metabolism; N-acetylneuraminate degradation; D-fructose 6-phosphate from N-acetylneuraminate: step 3/5. Its function is as follows. Converts N-acetylmannosamine-6-phosphate (ManNAc-6-P) to N-acetylglucosamine-6-phosphate (GlcNAc-6-P). The sequence is that of Putative N-acetylmannosamine-6-phosphate 2-epimerase from Enterobacter sp. (strain 638).